A 1088-amino-acid polypeptide reads, in one-letter code: Extended synaptotagmin-1 (1088 aa).

At Met-1 the chain carries N-acetylmethionine. At Met-1–Ser-30 the chain is on the cytoplasmic side. The interval Met-1–Gly-38 is disordered. Residues Gly-31 to Gly-51 traverse the membrane as a helical segment. At Arg-52–Leu-54 the chain is on the lumenal side. Residues Leu-55–Phe-75 traverse the membrane as a helical segment. Topologically, residues Gly-76–Ser-1088 are cytoplasmic. The SMP-LTD domain occupies Asp-127–Val-305. C2 domains follow at residues Leu-304 to Tyr-425, Asp-446 to Ser-572, Asp-618 to Leu-740, and Gln-771 to Gly-888. A Phosphoserine; by CDK5 modification is found at Ser-316. 8 residues coordinate Ca(2+): Lys-336, Asp-337, Asp-349, Asp-396, Asp-398, Asp-400, Asp-402, and Asp-403. Positions Thr-599 to Ser-630 are disordered. Lys-806 bears the N6-acetyllysine mark. Ser-809 bears the Phosphoserine mark. Residues His-911–His-930 form a disordered region. Residues Ser-933 and Ser-947 each carry the phosphoserine modification. The region spanning Pro-955–Tyr-1077 is the C2 5 domain. At Tyr-993 the chain carries Phosphotyrosine. Residues Lys-1002–Lys-1009 form a required for phosphatidylinositol 4,5-bisphosphate-dependent location at the cell membrane region.

This sequence belongs to the extended synaptotagmin family. Interacts with ESYT2 and ESYT3. Interacts with ADGRD1; inhibiting the G-protein-coupled receptor activity of ADGRD1. Interaction with ADGRD1 is abolished when cytosolic calcium increases, relieving ADGRD1 G-protein-coupled receptor activity. Interacts (phosphorylated form) with SLC2A4. In terms of processing, phosphorylated on Ser residues in insulin-treated adipocytes (in vitro); this promotes interaction with SLC2A4. As to expression, ubiquitously expressed with a higher expression in spleen and white adipose tissue.

The protein localises to the endoplasmic reticulum membrane. Its subcellular location is the cell membrane. In terms of biological role, binds calcium (via the C2 domains) and translocates to sites of contact between the endoplasmic reticulum and the cell membrane in response to increased cytosolic calcium levels. Helps tether the endoplasmic reticulum to the cell membrane and promotes the formation of appositions between the endoplasmic reticulum and the cell membrane. Acts as an inhibitor of ADGRD1 G-protein-coupled receptor activity in absence of cytosolic calcium. Binds glycerophospholipids in a barrel-like domain and may play a role in cellular lipid transport. The sequence is that of Extended synaptotagmin-1 (Esyt1) from Rattus norvegicus (Rat).